Reading from the N-terminus, the 594-residue chain is Probable translation initiation factor IF-2 (594 aa).

One can recognise a tr-type G domain in the interval 3-220 (IRSPIVSVLG…MLMGLAQQYL (218 aa)). The segment at 12-19 (GHVDHGKT) is G1. A GTP-binding site is contributed by 12-19 (GHVDHGKT). The G2 stretch occupies residues 37–41 (GITQH). Positions 76 to 79 (DTPG) are G3. GTP is bound by residues 76 to 80 (DTPGH) and 130 to 133 (NKID). Residues 130-133 (NKID) form a G4 region. Positions 198-200 (SAI) are G5.

This sequence belongs to the TRAFAC class translation factor GTPase superfamily. Classic translation factor GTPase family. IF-2 subfamily.

Its function is as follows. Function in general translation initiation by promoting the binding of the formylmethionine-tRNA to ribosomes. Seems to function along with eIF-2. The sequence is that of Probable translation initiation factor IF-2 (infB) from Methanothermobacter thermautotrophicus (strain ATCC 29096 / DSM 1053 / JCM 10044 / NBRC 100330 / Delta H) (Methanobacterium thermoautotrophicum).